The sequence spans 834 residues: Ras GTPase-activating protein 3 (834 aa).

C2 domains lie at 1–112 (MAVE…DTWF) and 123–263 (VQGK…EAWY). Ala-2 is modified (N-acetylalanine). Tyr-66 bears the Phosphotyrosine mark. Position 77 is a phosphoserine (Ser-77). Residue Thr-110 is modified to Phosphothreonine. The Ras-GAP domain maps to 346-561 (GRVVPFISAI…DAVKNFLDLI (216 aa)). Residues 576-677 (ILLKEGFMIK…WIDILTKVSQ (102 aa)) form the PH domain. The segment at 679–715 (NQKRLTVFHPSAYLNGHWLCCRASSDTAAGCTPCTGG) adopts a Btk-type zinc-finger fold. Zn(2+) contacts are provided by His-687, Cys-698, Cys-699, and Cys-709. Phosphoserine occurs at positions 809 and 833.

In terms of tissue distribution, high levels in brain, lower in spleen and lung.

In terms of biological role, inhibitory regulator of the Ras-cyclic AMP pathway. May bind inositol tetrakisphosphate (IP4). The polypeptide is Ras GTPase-activating protein 3 (Rasa3) (Mus musculus (Mouse)).